The sequence spans 150 residues: Large ribosomal subunit protein bL9 (150 aa).

This sequence belongs to the bacterial ribosomal protein bL9 family.

Its function is as follows. Binds to the 23S rRNA. In Variovorax paradoxus (strain S110), this protein is Large ribosomal subunit protein bL9.